Reading from the N-terminus, the 547-residue chain is Chaperonin GroEL 1 (547 aa).

Residues 30-33 (TLGP), K51, 87-91 (DGTTT), G415, and D496 each bind ATP.

The protein belongs to the chaperonin (HSP60) family. As to quaternary structure, forms a cylinder of 14 subunits composed of two heptameric rings stacked back-to-back. Interacts with the co-chaperonin GroES.

The protein localises to the cytoplasm. The enzyme catalyses ATP + H2O + a folded polypeptide = ADP + phosphate + an unfolded polypeptide.. In terms of biological role, together with its co-chaperonin GroES, plays an essential role in assisting protein folding. The GroEL-GroES system forms a nano-cage that allows encapsulation of the non-native substrate proteins and provides a physical environment optimized to promote and accelerate protein folding. The chain is Chaperonin GroEL 1 from Rhodopseudomonas palustris (strain BisB5).